A 335-amino-acid polypeptide reads, in one-letter code: RNA polymerase sigma factor RpoS (335 aa).

Residues 57–90 (DATQMYLSEIGFSPLLTAEEEVLYARRALRGDEA) are sigma-70 factor domain-1. The segment at 95 to 165 (MIESNLRLVV…ERALMNQTRT (71 aa)) is sigma-70 factor domain-2. An Interaction with polymerase core subunit RpoC motif is present at residues 119-122 (DLIE). The interval 175–250 (ELNIYLRTAR…DSHNADPEFS (76 aa)) is sigma-70 factor domain-3. The interval 263-316 (WLDELNPKQKEVLARRFGLLGYEPSTLEEVGREINLTRERVRQIQVEGLRRLRE) is sigma-70 factor domain-4. The H-T-H motif DNA-binding region spans 289–308 (LEEVGREINLTRERVRQIQV).

The protein belongs to the sigma-70 factor family. RpoS subfamily. As to quaternary structure, interacts with the RNA polymerase core enzyme.

It localises to the cytoplasm. Functionally, sigma factors are initiation factors that promote the attachment of RNA polymerase to specific initiation sites and are then released. This sigma factor is the master transcriptional regulator of the stationary phase and the general stress response. May be required for the persistence of V.cholerae in aquatic habitats. This is RNA polymerase sigma factor RpoS from Vibrio cholerae serotype O1 (strain ATCC 39315 / El Tor Inaba N16961).